The chain runs to 302 residues: Oxygen-dependent coproporphyrinogen-III oxidase (302 aa).

Serine 94 is a binding site for substrate. The a divalent metal cation site is built by histidine 98 and histidine 108. Histidine 108 (proton donor) is an active-site residue. 110–112 (NVR) provides a ligand contact to substrate. A divalent metal cation-binding residues include histidine 147 and histidine 177. Residues 242-277 (YVEFNLVWDRGTLFGLQSGGRTESILMSMPPLVRWE) are important for dimerization. 260–262 (GGR) provides a ligand contact to substrate.

The protein belongs to the aerobic coproporphyrinogen-III oxidase family. In terms of assembly, homodimer. It depends on a divalent metal cation as a cofactor.

Its subcellular location is the cytoplasm. The catalysed reaction is coproporphyrinogen III + O2 + 2 H(+) = protoporphyrinogen IX + 2 CO2 + 2 H2O. The protein operates within porphyrin-containing compound metabolism; protoporphyrin-IX biosynthesis; protoporphyrinogen-IX from coproporphyrinogen-III (O2 route): step 1/1. Its function is as follows. Involved in the heme biosynthesis. Catalyzes the aerobic oxidative decarboxylation of propionate groups of rings A and B of coproporphyrinogen-III to yield the vinyl groups in protoporphyrinogen-IX. This is Oxygen-dependent coproporphyrinogen-III oxidase from Chromobacterium violaceum (strain ATCC 12472 / DSM 30191 / JCM 1249 / CCUG 213 / NBRC 12614 / NCIMB 9131 / NCTC 9757 / MK).